A 145-amino-acid chain; its full sequence is Small ribosomal subunit protein uS12 (145 aa).

It belongs to the universal ribosomal protein uS12 family. As to quaternary structure, component of the small ribosomal subunit. Mature ribosomes consist of a small (40S) and a large (60S) subunit. The 40S subunit contains about 32 different proteins and 1 molecule of RNA (18S). The 60S subunit contains 45 different proteins and 3 molecules of RNA (25S, 5.8S and 5S).

The protein localises to the cytoplasm. Functionally, component of the ribosome, a large ribonucleoprotein complex responsible for the synthesis of proteins in the cell. The small ribosomal subunit (SSU) binds messenger RNAs (mRNAs) and translates the encoded message by selecting cognate aminoacyl-transfer RNA (tRNA) molecules. The large subunit (LSU) contains the ribosomal catalytic site termed the peptidyl transferase center (PTC), which catalyzes the formation of peptide bonds, thereby polymerizing the amino acids delivered by tRNAs into a polypeptide chain. The nascent polypeptides leave the ribosome through a tunnel in the LSU and interact with protein factors that function in enzymatic processing, targeting, and the membrane insertion of nascent chains at the exit of the ribosomal tunnel. The polypeptide is Small ribosomal subunit protein uS12 (RPS23A) (Candida albicans (strain SC5314 / ATCC MYA-2876) (Yeast)).